The primary structure comprises 474 residues: Amidophosphoribosyltransferase (474 aa).

A propeptide spanning residues 1 to 10 is cleaved from the precursor; sequence MLGESEVRDK. Catalysis depends on Cys11, which acts as the Nucleophile. The region spanning 11 to 234 is the Glutamine amidotransferase type-2 domain; sequence CGIVGIYSQD…PGEILHLNRG (224 aa). Cys250 serves as a coordination point for [4Fe-4S] cluster. Mg(2+) is bound by residues Ser297, Asp359, and Asp360. The [4Fe-4S] cluster site is built by Cys396, Cys447, and Cys450.

The protein in the C-terminal section; belongs to the purine/pyrimidine phosphoribosyltransferase family. It depends on Mg(2+) as a cofactor. [4Fe-4S] cluster serves as cofactor.

It catalyses the reaction 5-phospho-beta-D-ribosylamine + L-glutamate + diphosphate = 5-phospho-alpha-D-ribose 1-diphosphate + L-glutamine + H2O. It functions in the pathway purine metabolism; IMP biosynthesis via de novo pathway; N(1)-(5-phospho-D-ribosyl)glycinamide from 5-phospho-alpha-D-ribose 1-diphosphate: step 1/2. In terms of biological role, catalyzes the formation of phosphoribosylamine from phosphoribosylpyrophosphate (PRPP) and glutamine. In Methanothermobacter thermautotrophicus (strain ATCC 29096 / DSM 1053 / JCM 10044 / NBRC 100330 / Delta H) (Methanobacterium thermoautotrophicum), this protein is Amidophosphoribosyltransferase.